Consider the following 233-residue polypeptide: Isoprenyl transferase (233 aa).

The active site involves Asp12. Mg(2+) is bound at residue Asp12. Residues 13 to 16 (GNGR), Trp17, Arg25, His29, and 57 to 59 (STE) contribute to the substrate site. Asn60 serves as the catalytic Proton acceptor. Residues Trp61, Arg63, Arg178, and 184-186 (RLS) each bind substrate. Position 197 (Glu197) interacts with Mg(2+).

The protein belongs to the UPP synthase family. As to quaternary structure, homodimer. Requires Mg(2+) as cofactor.

In terms of biological role, catalyzes the condensation of isopentenyl diphosphate (IPP) with allylic pyrophosphates generating different type of terpenoids. This chain is Isoprenyl transferase, found in Thermotoga maritima (strain ATCC 43589 / DSM 3109 / JCM 10099 / NBRC 100826 / MSB8).